Consider the following 437-residue polypeptide: UDP-N-acetylmuramate--L-alanine ligase (437 aa).

Residue 108 to 114 (GAHGKTS) coordinates ATP.

This sequence belongs to the MurCDEF family.

Its subcellular location is the cytoplasm. It carries out the reaction UDP-N-acetyl-alpha-D-muramate + L-alanine + ATP = UDP-N-acetyl-alpha-D-muramoyl-L-alanine + ADP + phosphate + H(+). Its pathway is cell wall biogenesis; peptidoglycan biosynthesis. Its function is as follows. Cell wall formation. The protein is UDP-N-acetylmuramate--L-alanine ligase of Staphylococcus carnosus (strain TM300).